A 245-amino-acid chain; its full sequence is tRNA1(Val) (adenine(37)-N6)-methyltransferase (245 aa).

The protein belongs to the methyltransferase superfamily. tRNA (adenine-N(6)-)-methyltransferase family.

It localises to the cytoplasm. The catalysed reaction is adenosine(37) in tRNA1(Val) + S-adenosyl-L-methionine = N(6)-methyladenosine(37) in tRNA1(Val) + S-adenosyl-L-homocysteine + H(+). Specifically methylates the adenine in position 37 of tRNA(1)(Val) (anticodon cmo5UAC). This Salmonella paratyphi A (strain ATCC 9150 / SARB42) protein is tRNA1(Val) (adenine(37)-N6)-methyltransferase.